A 146-amino-acid chain; its full sequence is MLALIQRVTRAAVTVDDQIVGQIGPGLLALIGVEPGDSDAQIRRLAERLLSYRVFGDDAGKMNRSLTDTGGGLLLVSQFTLAADTSSGNRPGFSTAAPPLEAEPAFNQLVAICREKHRGGVEAGRFGAHMVVDLVNDGPVTFLLRP.

A Gly-cisPro motif, important for rejection of L-amino acids motif is present at residues 138-139; sequence GP.

This sequence belongs to the DTD family. Homodimer.

The protein resides in the cytoplasm. The catalysed reaction is glycyl-tRNA(Ala) + H2O = tRNA(Ala) + glycine + H(+). It carries out the reaction a D-aminoacyl-tRNA + H2O = a tRNA + a D-alpha-amino acid + H(+). In terms of biological role, an aminoacyl-tRNA editing enzyme that deacylates mischarged D-aminoacyl-tRNAs. Also deacylates mischarged glycyl-tRNA(Ala), protecting cells against glycine mischarging by AlaRS. Acts via tRNA-based rather than protein-based catalysis; rejects L-amino acids rather than detecting D-amino acids in the active site. By recycling D-aminoacyl-tRNA to D-amino acids and free tRNA molecules, this enzyme counteracts the toxicity associated with the formation of D-aminoacyl-tRNA entities in vivo and helps enforce protein L-homochirality. In Xanthomonas euvesicatoria pv. vesicatoria (strain 85-10) (Xanthomonas campestris pv. vesicatoria), this protein is D-aminoacyl-tRNA deacylase.